A 345-amino-acid chain; its full sequence is MIETDKLFGAAPERRIVTPQRASEQEEALERALRPKLLDEYVGQKKAREQLEIFIEAAKKRGEALDHVLLFGPPGLGKTTLAHIVAREMGVNLRQTSGPVLERAGDLAALLTNLEPHDVLFIDEIHRLSPVVEEILYPALEDYQIDIMIGEGPAARSVKIDLPPFTLVGATTRAGMLTNPLRDRFGIVARLEFYNAEELTRIVSRSAGLLNVQLSDDGAFEVAKRSRGTPRIANRLLRRVRDYAEVKSDGVVTMAVADAALAMLDVDPAGLDVMDRKLLQAILEKFSGGPVGLDNVAAAIGESTDTIEDVIEPFLIQQGYLQRTPRGRMATAQAYLHFGLPVKDA.

A large ATPase domain (RuvB-L) region spans residues 4–194 (TDKLFGAAPE…FGIVARLEFY (191 aa)). ATP is bound by residues Leu-33, Arg-34, Gly-75, Lys-78, Thr-79, Thr-80, 141–143 (EDY), Arg-184, Tyr-194, and Arg-231. Thr-79 contributes to the Mg(2+) binding site. A small ATPAse domain (RuvB-S) region spans residues 195 to 265 (NAEELTRIVS…VADAALAMLD (71 aa)). The tract at residues 268 to 345 (PAGLDVMDRK…LHFGLPVKDA (78 aa)) is head domain (RuvB-H). Positions 323 and 328 each coordinate DNA.

Belongs to the RuvB family. In terms of assembly, homohexamer. Forms an RuvA(8)-RuvB(12)-Holliday junction (HJ) complex. HJ DNA is sandwiched between 2 RuvA tetramers; dsDNA enters through RuvA and exits via RuvB. An RuvB hexamer assembles on each DNA strand where it exits the tetramer. Each RuvB hexamer is contacted by two RuvA subunits (via domain III) on 2 adjacent RuvB subunits; this complex drives branch migration. In the full resolvosome a probable DNA-RuvA(4)-RuvB(12)-RuvC(2) complex forms which resolves the HJ.

It localises to the cytoplasm. It catalyses the reaction ATP + H2O = ADP + phosphate + H(+). In terms of biological role, the RuvA-RuvB-RuvC complex processes Holliday junction (HJ) DNA during genetic recombination and DNA repair, while the RuvA-RuvB complex plays an important role in the rescue of blocked DNA replication forks via replication fork reversal (RFR). RuvA specifically binds to HJ cruciform DNA, conferring on it an open structure. The RuvB hexamer acts as an ATP-dependent pump, pulling dsDNA into and through the RuvAB complex. RuvB forms 2 homohexamers on either side of HJ DNA bound by 1 or 2 RuvA tetramers; 4 subunits per hexamer contact DNA at a time. Coordinated motions by a converter formed by DNA-disengaged RuvB subunits stimulates ATP hydrolysis and nucleotide exchange. Immobilization of the converter enables RuvB to convert the ATP-contained energy into a lever motion, pulling 2 nucleotides of DNA out of the RuvA tetramer per ATP hydrolyzed, thus driving DNA branch migration. The RuvB motors rotate together with the DNA substrate, which together with the progressing nucleotide cycle form the mechanistic basis for DNA recombination by continuous HJ branch migration. Branch migration allows RuvC to scan DNA until it finds its consensus sequence, where it cleaves and resolves cruciform DNA. The chain is Holliday junction branch migration complex subunit RuvB from Chromobacterium violaceum (strain ATCC 12472 / DSM 30191 / JCM 1249 / CCUG 213 / NBRC 12614 / NCIMB 9131 / NCTC 9757 / MK).